The sequence spans 458 residues: Ribulose bisphosphate carboxylase (458 aa).

Substrate is bound at residue Asn-111. Catalysis depends on Lys-166, which acts as the Proton acceptor. Lys-168 is a substrate binding site. Lys-191, Asp-193, and Glu-194 together coordinate Mg(2+). The residue at position 191 (Lys-191) is an N6-carboxylysine. His-287 serves as the catalytic Proton acceptor. The substrate site is built by Arg-288, His-321, and Ser-368.

This sequence belongs to the RuBisCO large chain family. Type II subfamily. Homodimer. Mg(2+) is required as a cofactor.

The catalysed reaction is 2 (2R)-3-phosphoglycerate + 2 H(+) = D-ribulose 1,5-bisphosphate + CO2 + H2O. The enzyme catalyses D-ribulose 1,5-bisphosphate + O2 = 2-phosphoglycolate + (2R)-3-phosphoglycerate + 2 H(+). Functionally, ruBisCO catalyzes two reactions: the carboxylation of D-ribulose 1,5-bisphosphate, the primary event in carbon dioxide fixation, as well as the oxidative fragmentation of the pentose substrate. Both reactions occur simultaneously and in competition at the same active site. This chain is Ribulose bisphosphate carboxylase (cbbM), found in Rhodobacter capsulatus (strain ATCC BAA-309 / NBRC 16581 / SB1003).